A 385-amino-acid polypeptide reads, in one-letter code: GDP-D-glucose phosphorylase 1 (385 aa).

His-218 serves as the catalytic Tele-GMP-histidine intermediate.

It belongs to the GDPGP1 family.

It is found in the cytoplasm. It carries out the reaction GDP-alpha-D-glucose + phosphate = alpha-D-glucose 1-phosphate + GDP + H(+). Specific and highly efficient GDP-D-glucose phosphorylase regulating the levels of GDP-D-glucose in cells. This chain is GDP-D-glucose phosphorylase 1 (GDPGP1), found in Macaca fascicularis (Crab-eating macaque).